Here is a 1489-residue protein sequence, read N- to C-terminus: DEAD-box ATP-dependent DNA helicase Fancm (1489 aa).

A Helicase ATP-binding domain is found at 65-237; that stretch reads IVQSALFKNT…AVCRNLYISN (173 aa). An ATP-binding site is contributed by 78-85; sequence LPTGLGKT. The short motif at 185 to 188 is the DEAH box element; that stretch reads DEAH. The 167-residue stretch at 418 to 584 folds into the Helicase C-terminal domain; that stretch reads KLRQVLVQHF…VVKLSLYEQN (167 aa). 6 disordered regions span residues 591–647, 980–1000, 1145–1182, 1196–1222, 1255–1293, and 1452–1489; these read KFQP…ESQQ, VEES…ESNH, TETI…PQGK, VLPC…SIQE, NPTI…PQIA, and ERRK…VLID. Residues 594-610 show a composition bias toward basic and acidic residues; it reads PKCEEKHMEPVAEEKPK. A compositionally biased stretch (basic residues) spans 611–625; the sequence is PKSAAKTKESRKRKQ. Polar residues predominate over residues 985 to 998; it reads RSTPISIADSSGES. Basic and acidic residues predominate over residues 1149–1161; it reads KNSENKNSHEDGS. Acidic residues predominate over residues 1480–1489; the sequence is SDEDDVVLID.

Belongs to the DEAD box helicase family. DEAH subfamily. FANCM sub-subfamily.

It localises to the nucleus. The enzyme catalyses ATP + H2O = ADP + phosphate + H(+). It carries out the reaction Couples ATP hydrolysis with the unwinding of duplex DNA by translocating in the 3'-5' direction.. In terms of biological role, a ssDNA-dependent ATPase with 3' to 5' helicase activity. Involved in multiple DNA-damage responses, some that require ATPase and helicase activity and some that are independent of these. Involved in DNA interstrand cross-link repair, probably together with Fancl and other Fanconi anemia pathway homologs. Independent of Fancl involved in DNA double strand break repair, including contributing to the synthesis-dependent strand annealing (SDSA) pathway. Probably contributes to SDSA by unwinding short duplex regions in complex D-loop-like DNA structures. In Drosophila melanogaster (Fruit fly), this protein is DEAD-box ATP-dependent DNA helicase Fancm.